Reading from the N-terminus, the 107-residue chain is Phosphoribosyl-ATP pyrophosphatase (107 aa).

It belongs to the PRA-PH family.

It is found in the cytoplasm. The enzyme catalyses 1-(5-phospho-beta-D-ribosyl)-ATP + H2O = 1-(5-phospho-beta-D-ribosyl)-5'-AMP + diphosphate + H(+). The protein operates within amino-acid biosynthesis; L-histidine biosynthesis; L-histidine from 5-phospho-alpha-D-ribose 1-diphosphate: step 2/9. The sequence is that of Phosphoribosyl-ATP pyrophosphatase from Bacillus cereus (strain G9842).